A 518-amino-acid polypeptide reads, in one-letter code: E3 ubiquitin-protein ligase TRIM39 (518 aa).

The segment at cysteine 29–arginine 70 adopts an RING-type zinc-finger fold. The segment at arginine 102–leucine 143 adopts a B box-type zinc-finger fold. Positions 107, 110, 129, and 135 each coordinate Zn(2+). A coiled-coil region spans residues glutamate 181–lysine 250. Interaction with CDKN1A stretches follow at residues lysine 268–alanine 337 and threonine 389–glutamate 518. One can recognise a B30.2/SPRY domain in the interval serine 319–proline 514.

It belongs to the TRIM/RBCC family. Interacts with MOAP1. Interacts with CDKN1A. In terms of processing, autoubiquitinated.

Its subcellular location is the cytoplasm. It is found in the cytosol. It localises to the mitochondrion. The protein localises to the nucleus. The catalysed reaction is S-ubiquitinyl-[E2 ubiquitin-conjugating enzyme]-L-cysteine + [acceptor protein]-L-lysine = [E2 ubiquitin-conjugating enzyme]-L-cysteine + N(6)-ubiquitinyl-[acceptor protein]-L-lysine.. It participates in protein modification; protein ubiquitination. E3 ubiquitin-protein ligase. May facilitate apoptosis by inhibiting APC/C-Cdh1-mediated poly-ubiquitination and subsequent proteasome-mediated degradation of the pro-apoptotic protein MOAP1. Regulates the G1/S transition of the cell cycle and DNA damage-induced G2 arrest by stabilizing CDKN1A/p21. Positively regulates CDKN1A/p21 stability by competing with DTL for CDKN1A/p21 binding, therefore disrupting DCX(DTL) E3 ubiquitin ligase complex-mediated CDKN1A/p21 ubiquitination and degradation. In Pan troglodytes (Chimpanzee), this protein is E3 ubiquitin-protein ligase TRIM39 (TRIM39).